Consider the following 149-residue polypeptide: Transcriptional repressor NrdR (149 aa).

Residues 3 to 34 (CPFCTAVDTKVIDSRLVGDGSQVRRRRQCLVC) fold into a zinc finger. The ATP-cone domain occupies 49 to 139 (PRVVKSDEIR…VYRSFEDVRD (91 aa)).

This sequence belongs to the NrdR family. It depends on Zn(2+) as a cofactor.

Functionally, negatively regulates transcription of bacterial ribonucleotide reductase nrd genes and operons by binding to NrdR-boxes. This is Transcriptional repressor NrdR from Proteus mirabilis (strain HI4320).